The chain runs to 467 residues: Asparagine--tRNA ligase (467 aa).

It belongs to the class-II aminoacyl-tRNA synthetase family. In terms of assembly, homodimer.

Its subcellular location is the cytoplasm. It carries out the reaction tRNA(Asn) + L-asparagine + ATP = L-asparaginyl-tRNA(Asn) + AMP + diphosphate + H(+). This Pasteurella multocida (strain Pm70) protein is Asparagine--tRNA ligase.